Reading from the N-terminus, the 424-residue chain is Calreticulin-2 (424 aa).

A signal peptide spans 1–22; the sequence is MAKMIPSLVSLILIGLVAIASA. Residue asparagine 59 is glycosylated (N-linked (GlcNAc...) asparagine). Cysteine 108 and cysteine 140 are oxidised to a cystine. Positions 112, 114, 131, and 138 each coordinate an alpha-D-glucoside. 7 tandem repeats follow at residues 194 to 205, 213 to 224, 230 to 241, 248 to 259, 263 to 273, 277 to 287, and 291 to 301. Residues 194–259 form a 4 X approximate repeats region; that stretch reads KQTGSLYSDW…DSKKPEDWDD (66 aa). Residues 210 to 220 are compositionally biased toward basic and acidic residues; that stretch reads KIKDPSAKKPE. Residues 210-279 are disordered; that stretch reads KIKDPSAKKP…IPNPEYMGEW (70 aa). A compositionally biased stretch (acidic residues) spans 221–230; the sequence is DWDEQEYISD. Positions 231 to 255 are enriched in basic and acidic residues; that stretch reads PEDKKPDGYDDIPKEIPDTDSKKPE. Residues 263–301 are 3 X approximate repeats; the sequence is GEWTAPTIPNPEYMGEWKPKQIKNPNYKGKWEAPLIDNP. Residue glutamate 321 coordinates an alpha-D-glucoside. Basic and acidic residues predominate over residues 362–378; it reads FDEAEKKNEEEESKDAP. The interval 362–424 is disordered; the sequence is FDEAEKKNEE…EKDATAHDEL (63 aa). Positions 379–397 are enriched in acidic residues; that stretch reads AESDAEDEPEDDEGGDDSD. Phosphoserine occurs at positions 381 and 396. Basic and acidic residues predominate over residues 398-424; that stretch reads SESKAEETKSVDSEETSEKDATAHDEL. The Prevents secretion from ER signature appears at 421-424; the sequence is HDEL.

This sequence belongs to the calreticulin family.

The protein resides in the endoplasmic reticulum lumen. In terms of biological role, molecular calcium-binding chaperone promoting folding, oligomeric assembly and quality control in the ER via the calreticulin/calnexin cycle. This lectin may interact transiently with almost all of the monoglucosylated glycoproteins that are synthesized in the ER. In Arabidopsis thaliana (Mouse-ear cress), this protein is Calreticulin-2 (CRT2).